The following is a 502-amino-acid chain: Glucose-6-phosphate isomerase (502 aa).

Glu331 functions as the Proton donor in the catalytic mechanism. Active-site residues include His362 and Lys471.

This sequence belongs to the GPI family.

The protein localises to the cytoplasm. The catalysed reaction is alpha-D-glucose 6-phosphate = beta-D-fructose 6-phosphate. Its pathway is carbohydrate biosynthesis; gluconeogenesis. It participates in carbohydrate degradation; glycolysis; D-glyceraldehyde 3-phosphate and glycerone phosphate from D-glucose: step 2/4. Its function is as follows. Catalyzes the reversible isomerization of glucose-6-phosphate to fructose-6-phosphate. The polypeptide is Glucose-6-phosphate isomerase (Xylella fastidiosa (strain 9a5c)).